A 306-amino-acid chain; its full sequence is Methionyl-tRNA formyltransferase (306 aa).

Residue 110 to 113 participates in (6S)-5,6,7,8-tetrahydrofolate binding; that stretch reads SLLP.

It belongs to the Fmt family.

It carries out the reaction L-methionyl-tRNA(fMet) + (6R)-10-formyltetrahydrofolate = N-formyl-L-methionyl-tRNA(fMet) + (6S)-5,6,7,8-tetrahydrofolate + H(+). Attaches a formyl group to the free amino group of methionyl-tRNA(fMet). The formyl group appears to play a dual role in the initiator identity of N-formylmethionyl-tRNA by promoting its recognition by IF2 and preventing the misappropriation of this tRNA by the elongation apparatus. This chain is Methionyl-tRNA formyltransferase, found in Brucella abortus (strain S19).